The sequence spans 229 residues: Uracil-DNA glycosylase (229 aa).

Residue Asp-64 is the Proton acceptor of the active site.

The protein belongs to the uracil-DNA glycosylase (UDG) superfamily. UNG family.

Its subcellular location is the cytoplasm. It carries out the reaction Hydrolyzes single-stranded DNA or mismatched double-stranded DNA and polynucleotides, releasing free uracil.. Functionally, excises uracil residues from the DNA which can arise as a result of misincorporation of dUMP residues by DNA polymerase or due to deamination of cytosine. This is Uracil-DNA glycosylase from Escherichia coli (strain 55989 / EAEC).